A 418-amino-acid polypeptide reads, in one-letter code: MSDSALLNCRQLVTLAGPPGPRTGPAMRELAIIPDGAMRIRDGCIAAVGPRADIVRSLAGDTEVIDAGWRVVLPGFIDAHTHPVFAGTRAAEYEQRAEGATYAEIAAAGGGIRSTVRRTREAGDLELATAARRYTDWFLRGGTTTIEAKSGYGLSLDDELRILKTIRLLNAERRLRYVPTFLGAHEIPDEYRGEIEDYVDLVIQEMLPAVAEDNLAEYCDVFCEPNVFPLDPARAILQAAQSLGLRLRIHADQFTGDYAALLAAELGAATADHLESTTALGLAALHEAGVQPVLLPASVYNLGSARYPAARDMIARGMAVVLATDFNPGSSPTASIPMVLSLASTQMKMTPAESITAVTVNAAHSLGRGSRIGSLEPGKAADFAIHECDDYRELAYFFGREPANAVYLAGQCVYRRSA.

Residues histidine 80 and histidine 82 each coordinate Fe(3+). Positions 80 and 82 each coordinate Zn(2+). 4-imidazolone-5-propanoate contacts are provided by arginine 89, tyrosine 152, and histidine 185. Position 152 (tyrosine 152) interacts with N-formimidoyl-L-glutamate. Position 250 (histidine 250) interacts with Fe(3+). Histidine 250 serves as a coordination point for Zn(2+). Glutamine 253 contacts 4-imidazolone-5-propanoate. Aspartate 325 contributes to the Fe(3+) binding site. Aspartate 325 contributes to the Zn(2+) binding site. N-formimidoyl-L-glutamate-binding residues include asparagine 327 and glycine 329. A 4-imidazolone-5-propanoate-binding site is contributed by serine 330.

Belongs to the metallo-dependent hydrolases superfamily. HutI family. Zn(2+) serves as cofactor. Requires Fe(3+) as cofactor.

It is found in the cytoplasm. It catalyses the reaction 4-imidazolone-5-propanoate + H2O = N-formimidoyl-L-glutamate. Its pathway is amino-acid degradation; L-histidine degradation into L-glutamate; N-formimidoyl-L-glutamate from L-histidine: step 3/3. Catalyzes the hydrolytic cleavage of the carbon-nitrogen bond in imidazolone-5-propanoate to yield N-formimidoyl-L-glutamate. It is the third step in the universal histidine degradation pathway. In Solibacter usitatus (strain Ellin6076), this protein is Imidazolonepropionase.